We begin with the raw amino-acid sequence, 486 residues long: Beta-barrel assembly-enhancing protease (486 aa).

Positions 1-19 are cleaved as a signal peptide; that stretch reads MIATLLSSLLLTGPISAGA. H134 contacts Zn(2+). E135 is a catalytic residue. Zn(2+)-binding residues include H138 and E199. The active-site Proton donor is D203.

This sequence belongs to the peptidase M48 family. BepA subfamily. Zn(2+) is required as a cofactor.

The protein resides in the periplasm. Functionally, functions both as a chaperone and a metalloprotease. Maintains the integrity of the outer membrane by promoting either the assembly or the elimination of outer membrane proteins, depending on their folding state. In Yersinia pestis, this protein is Beta-barrel assembly-enhancing protease.